Consider the following 457-residue polypeptide: Variant surface glycoprotein 20 (457 aa).

The signal sequence occupies residues methionine 1–threonine 20. Positions arginine 385–asparagine 397 are enriched in polar residues. The disordered stretch occupies residues arginine 385 to glutamate 406. Residue asparagine 436 is glycosylated (N-linked (GlcNAc...) asparagine). Residue serine 440 is the site of GPI-anchor amidated serine attachment. Positions asparagine 441–phenylalanine 457 are cleaved as a propeptide — removed in mature form.

Its subcellular location is the cell membrane. Functionally, VSG forms a coat on the surface of the parasite. The trypanosome evades the immune response of the host by expressing a series of antigenically distinct VSGs from an estimated 1000 VSG genes. The polypeptide is Variant surface glycoprotein 20 (Trypanosoma equiperdum).